The following is a 468-amino-acid chain: Glutamate--tRNA ligase (468 aa).

A 'HIGH' region motif is present at residues 10–20 (PSPTGYLHIGG). The short motif at 252–256 (KLSKR) is the 'KMSKS' region element. An ATP-binding site is contributed by Lys-255.

The protein belongs to the class-I aminoacyl-tRNA synthetase family. Glutamate--tRNA ligase type 1 subfamily. In terms of assembly, monomer.

Its subcellular location is the cytoplasm. It catalyses the reaction tRNA(Glu) + L-glutamate + ATP = L-glutamyl-tRNA(Glu) + AMP + diphosphate. Catalyzes the attachment of glutamate to tRNA(Glu) in a two-step reaction: glutamate is first activated by ATP to form Glu-AMP and then transferred to the acceptor end of tRNA(Glu). The polypeptide is Glutamate--tRNA ligase (Mycoplasmopsis pulmonis (strain UAB CTIP) (Mycoplasma pulmonis)).